The chain runs to 284 residues: Tryptophan synthase alpha chain (284 aa).

Catalysis depends on proton acceptor residues glutamate 59 and aspartate 70.

Belongs to the TrpA family. As to quaternary structure, tetramer of two alpha and two beta chains.

It catalyses the reaction (1S,2R)-1-C-(indol-3-yl)glycerol 3-phosphate + L-serine = D-glyceraldehyde 3-phosphate + L-tryptophan + H2O. It participates in amino-acid biosynthesis; L-tryptophan biosynthesis; L-tryptophan from chorismate: step 5/5. The alpha subunit is responsible for the aldol cleavage of indoleglycerol phosphate to indole and glyceraldehyde 3-phosphate. This Azospirillum brasilense protein is Tryptophan synthase alpha chain.